The sequence spans 353 residues: Ribosome biogenesis protein BRX1 homolog (353 aa).

Residues 1 to 10 show a composition bias toward basic residues; it reads MAATKRKRRG. The tract at residues 1–46 is disordered; sequence MAATKRKRRGGFAVQAKKPKRNEKDAEPPAKRHATAEEVEEEERDR. Positions 22-36 are enriched in basic and acidic residues; that stretch reads NEKDAEPPAKRHATA. In terms of domain architecture, Brix spans 60–249; that stretch reads ERILIFSSRG…LIKIFQGSFG (190 aa). Residue K160 forms a Glycyl lysine isopeptide (Lys-Gly) (interchain with G-Cter in SUMO2) linkage. Residue S261 is modified to Phosphoserine. K276 carries the N6-acetyllysine modification. Glycyl lysine isopeptide (Lys-Gly) (interchain with G-Cter in SUMO2) cross-links involve residues K314 and K322.

The protein belongs to the BRX1 family.

Its subcellular location is the nucleus. The protein resides in the nucleolus. Its function is as follows. Required for biogenesis of the 60S ribosomal subunit. The polypeptide is Ribosome biogenesis protein BRX1 homolog (BRIX1) (Pongo abelii (Sumatran orangutan)).